The sequence spans 212 residues: Proteasome subunit beta 2 (212 aa).

The propeptide at 1-15 (MLHHPGTGQLRALKG) is removed in mature form; by autocatalysis. Thr16 acts as the Nucleophile in catalysis.

This sequence belongs to the peptidase T1B family. In terms of assembly, the 20S proteasome core is composed of 14 alpha and 14 beta subunits that assemble into four stacked heptameric rings, resulting in a barrel-shaped structure. The two inner rings, each composed of seven catalytic beta subunits, are sandwiched by two outer rings, each composed of seven alpha subunits. The catalytic chamber with the active sites is on the inside of the barrel. Has a gated structure, the ends of the cylinder being occluded by the N-termini of the alpha-subunits. Is capped at one or both ends by the proteasome regulatory ATPase, PAN.

It localises to the cytoplasm. It catalyses the reaction Cleavage of peptide bonds with very broad specificity.. The formation of the proteasomal ATPase PAN-20S proteasome complex, via the docking of the C-termini of PAN into the intersubunit pockets in the alpha-rings, triggers opening of the gate for substrate entry. Interconversion between the open-gate and close-gate conformations leads to a dynamic regulation of the 20S proteasome proteolysis activity. Component of the proteasome core, a large protease complex with broad specificity involved in protein degradation. The protein is Proteasome subunit beta 2 of Hyperthermus butylicus (strain DSM 5456 / JCM 9403 / PLM1-5).